A 406-amino-acid polypeptide reads, in one-letter code: Peptidase T (406 aa).

Residue H82 participates in Zn(2+) binding. D84 is an active-site residue. A Zn(2+)-binding site is contributed by D142. Residue E176 is the Proton acceptor of the active site. Zn(2+) is bound by residues E177, D199, and H381.

Belongs to the peptidase M20B family. Zn(2+) serves as cofactor.

It localises to the cytoplasm. The catalysed reaction is Release of the N-terminal residue from a tripeptide.. Its function is as follows. Cleaves the N-terminal amino acid of tripeptides. In Streptococcus agalactiae serotype Ia (strain ATCC 27591 / A909 / CDC SS700), this protein is Peptidase T.